We begin with the raw amino-acid sequence, 76 residues long: ATP synthase peripheral stalk subunit F6, mitochondrial (76 aa).

N6-acetyllysine is present on residues Lys9, Lys14, and Lys47. Residues Lys52 and Lys67 each carry the N6-acetyllysine; alternate modification. N6-succinyllysine; alternate is present on residues Lys52 and Lys67. Lys73 is modified (N6-acetyllysine). Ser76 carries the post-translational modification Phosphoserine.

This sequence belongs to the eukaryotic ATPase subunit F6 family. Component of the ATP synthase complex composed at least of ATP5F1A/subunit alpha, ATP5F1B/subunit beta, ATP5MC1/subunit c (homooctomer), MT-ATP6/subunit a, MT-ATP8/subunit 8, ATP5ME/subunit e, ATP5MF/subunit f, ATP5MG/subunit g, ATP5MK/subunit k, ATP5MJ/subunit j, ATP5F1C/subunit gamma, ATP5F1D/subunit delta, ATP5F1E/subunit epsilon, ATP5PF/subunit F6, ATP5PB/subunit b, ATP5PD/subunit d, ATP5PO/subunit OSCP. ATP synthase complex consists of a soluble F(1) head domain (subunits alpha(3) and beta(3)) - the catalytic core - and a membrane F(0) domain - the membrane proton channel (subunits c, a, 8, e, f, g, k and j). These two domains are linked by a central stalk (subunits gamma, delta, and epsilon) rotating inside the F1 region and a stationary peripheral stalk (subunits F6, b, d, and OSCP).

It localises to the mitochondrion. Its subcellular location is the mitochondrion inner membrane. In terms of biological role, subunit F6, of the mitochondrial membrane ATP synthase complex (F(1)F(0) ATP synthase or Complex V) that produces ATP from ADP in the presence of a proton gradient across the membrane which is generated by electron transport complexes of the respiratory chain. ATP synthase complex consist of a soluble F(1) head domain - the catalytic core - and a membrane F(1) domain - the membrane proton channel. These two domains are linked by a central stalk rotating inside the F(1) region and a stationary peripheral stalk. During catalysis, ATP synthesis in the catalytic domain of F(1) is coupled via a rotary mechanism of the central stalk subunits to proton translocation. In vivo, can only synthesize ATP although its ATP hydrolase activity can be activated artificially in vitro. Part of the complex F(0) domain. Part of the complex F(0) domain and the peripheric stalk, which acts as a stator to hold the catalytic alpha(3)beta(3) subcomplex and subunit a/ATP6 static relative to the rotary elements. This chain is ATP synthase peripheral stalk subunit F6, mitochondrial, found in Sus scrofa (Pig).